Reading from the N-terminus, the 367-residue chain is Cytochrome b (367 aa).

Helical transmembrane passes span 33–53 (FGSLLGICLALQILTGLFLAM), 77–98 (WVLRYMHANGASMFFICLYLHI), 113–133 (WNMGVILLFAVMATAFMGYVL), and 178–198 (FFAFHFLLPFIISALVMVHLL). Residues His83 and His97 each contribute to the heme b site. The heme b site is built by His182 and His196. Position 201 (His201) interacts with a ubiquinone. Helical transmembrane passes span 226–246 (IKDILGFFMMMLILLCLVLFS), 288–308 (LGGVLALVLSILILIIIPFLH), 320–340 (FSQCLFWLLVADLLTLTWIGG), and 347–367 (YIIIGQLASILYFMIIIVIMP).

It belongs to the cytochrome b family. The cytochrome bc1 complex contains 11 subunits: 3 respiratory subunits (MT-CYB, CYC1 and UQCRFS1), 2 core proteins (UQCRC1 and UQCRC2) and 6 low-molecular weight proteins (UQCRH/QCR6, UQCRB/QCR7, UQCRQ/QCR8, UQCR10/QCR9, UQCR11/QCR10 and a cleavage product of UQCRFS1). This cytochrome bc1 complex then forms a dimer. Heme b serves as cofactor.

It is found in the mitochondrion inner membrane. Functionally, component of the ubiquinol-cytochrome c reductase complex (complex III or cytochrome b-c1 complex) that is part of the mitochondrial respiratory chain. The b-c1 complex mediates electron transfer from ubiquinol to cytochrome c. Contributes to the generation of a proton gradient across the mitochondrial membrane that is then used for ATP synthesis. The chain is Cytochrome b (MT-CYB) from Hypsugo savii (Savi's pipistrelle).